Reading from the N-terminus, the 81-residue chain is Omega-conotoxin-like TxO4 (81 aa).

The first 22 residues, 1-22, serve as a signal peptide directing secretion; sequence MKLTCVVIVAVLFLTAWTFVTA. The propeptide occupies 23–52; it reads VPHSSNALENLYLKARHEMENPEASKLNTR. Intrachain disulfides connect C55/C72, C62/C76, and C71/C80. Residue P70 is modified to 4-hydroxyproline; partial. Position 75 is a 6'-bromotryptophan; partial (W75).

It belongs to the conotoxin O1 superfamily. In terms of processing, txO4 is found with and without hydroxyproline and these two forms have a bromotryptophan. Truncated TxO4 is found with and without bromotryptophan, and these two forms have no hydroxyproline. Expressed by the venom duct.

It is found in the secreted. In terms of biological role, omega-conotoxins act at presynaptic membranes, they bind and block voltage-gated calcium channels (Cav). This is Omega-conotoxin-like TxO4 from Conus textile (Cloth-of-gold cone).